Consider the following 156-residue polypeptide: Aspartate carbamoyltransferase regulatory chain (156 aa).

Residues Cys109, Cys114, Cys140, and Cys143 each coordinate Zn(2+).

It belongs to the PyrI family. In terms of assembly, contains catalytic and regulatory chains. Zn(2+) serves as cofactor.

Its function is as follows. Involved in allosteric regulation of aspartate carbamoyltransferase. The protein is Aspartate carbamoyltransferase regulatory chain of Methanosarcina acetivorans (strain ATCC 35395 / DSM 2834 / JCM 12185 / C2A).